The chain runs to 780 residues: MRINILRVEYHSKTAHSILLQLDLFKKVKVICHMSQSIKFRVTEARQRDVGKKVARISETSMRKLNVEAGDYIEIIGQDGNSALAQVMPAYDISDDEIRIDGYIRKSIKVGIGDDVTVRKTNVSPASKVVLAPTQPIRFDNSFVEYVKDTLMDKPLAKGETLPIPIYTGTLELTVVNTQPSNYVYVTGSTNIEIREEPVKESSLAYPKVSWEDIGDLEEAKQKIREIVEWPMRHPELFQRLGIDPPKGILLYGPPGTGKTLLARALANEIGAYFITVNGPEIMSKFYGESEQRIREIFKEAEENAPSIIFIDEIDAIAPKREDVTGEVEKRVVAQLLTLMDGIKGRGRVIVIGATNRPDAIDPALRRPGRFDREIEIRPPDTKGRKDILQVHTRNMPITDDVDLDKLAEMTYGYTGADLAALAKEAAIYALRRFVDEKKLNLDQPTIPAEIIKELKVSMNDFLNALKSIQPSLLREVYVEVPKVNWNDIGGLDNVKQQLREAVEWPLRFPELFTKSGVTPPKGILLFGPPGTGKTMLAKAVATESGANFIAVRGPEILSKWVGESEKAIREIFRKARQAAPTVIFFDEIDSIAPIRGLSTDSGVTERIVNQLLAEMDGIVPLNKVVIIAATNRPDILDPALLRPGRFDRLIYVPPPDKTARFEILKVHTKNVPLAEDVSLEDIAEKAEGYTGADLEALVREATINAMRSIYSMCDKQSRDECKGNMECYQKHIKECMNKTSFKVSKEDFEKALNVVKASLTQADIQRYERFSKELKRAIA.

ATP is bound by residues 253-260 (GPPGTGKT) and 528-535 (GPPGTGKT).

This sequence belongs to the AAA ATPase family. CDC48 subfamily.

Functionally, not yet known, shows ATPase activity. In Sulfolobus acidocaldarius (strain ATCC 33909 / DSM 639 / JCM 8929 / NBRC 15157 / NCIMB 11770), this protein is Protein SAV (sav).